We begin with the raw amino-acid sequence, 144 residues long: Maximins 9/H3 (144 aa).

The signal sequence occupies residues 1 to 18; sequence MNFKYIVAVSFLIASAYA. Residues 19 to 43 constitute a propeptide that is removed on maturation; that stretch reads RSVKNDEQSLSQRDVLEEESLREIR. A Tyrosine amide modification is found at tyrosine 70. Positions 74–123 are excised as a propeptide; the sequence is TAEEHEVMKRLEAIMRDLDSLDHPEEASERETRGFNQDEIANLFTKKEKR. Residue isoleucine 143 is modified to Isoleucine amide.

The protein belongs to the bombinin family. Expressed by the skin glands.

The protein localises to the secreted. Functionally, maximin-9 shows antimicrobial activity against bacteria and against the fungus C.albicans. It has little hemolytic activity. Maximin-H3 shows antibacterial activity against both Gram-positive and Gram-negative bacteria. It also shows antimicrobial activity against the fungus C.albicans. Shows strong hemolytic activity. The polypeptide is Maximins 9/H3 (Bombina maxima (Giant fire-bellied toad)).